Reading from the N-terminus, the 461-residue chain is GTPase Der (461 aa).

EngA-type G domains lie at 2-164 and 197-369; these read QSII…NENF and IKVG…ANFT. GTP is bound by residues 8-15, 55-59, 116-119, 203-210, 250-254, and 314-317; these read GKPNVGKS, DSGGL, NKID, GRVNVGKS, DTAGI, and NKWD. In terms of domain architecture, KH-like spans 370 to 454; it reads QKIPTAKLNA…PLIIVSRKKG (85 aa).

It belongs to the TRAFAC class TrmE-Era-EngA-EngB-Septin-like GTPase superfamily. EngA (Der) GTPase family. Associates with the 50S ribosomal subunit.

Functionally, GTPase that plays an essential role in the late steps of ribosome biogenesis. In Campylobacter lari (strain RM2100 / D67 / ATCC BAA-1060), this protein is GTPase Der.